The sequence spans 141 residues: Cystatin (141 aa).

An N-terminal signal peptide occupies residues 1-26 (MVHSQLPVAGPLRLLCALLLLPSATM). A Cystatin domain is found at 29–129 (GGLSPRSVTD…CRFQVWSRPW (101 aa)). A Secondary area of contact motif is present at residues 73 to 77 (QVVSG). 2 disulfides stabilise this stretch: Cys91–Cys107 and Cys120–Cys140.

The protein belongs to the cystatin family. Expressed at a low level by the venom gland (at protein level).

The protein resides in the secreted. Inhibits various C1 cysteine proteases including cathepsin L, papain and cathepsin B. This protein has no toxic activity and its function in the venom is unknown. It may play a role as a housekeeping or regulatory protein. This chain is Cystatin, found in Pseudechis porphyriacus (Red-bellied black snake).